The chain runs to 376 residues: T-box transcription factor 18 (376 aa).

Low complexity predominate over residues 38–63; sequence STSRPSSSSPPSLPAVSSELLSSSFP. The tract at residues 38 to 76 is disordered; that stretch reads STSRPSSSSPPSLPAVSSELLSSSFPTNAPESSSRDLAP. The T-box DNA-binding region spans 171–364; that stretch reads LANQEQWAKF…GNKYCRTDRK (194 aa).

Its subcellular location is the nucleus. Functionally, transcriptional regulator involved in developmental processes. Directly binds to the promoter region of the sex-determining factor xol-1 to activate its transcription. Its activation of xol-1 transcription controls sex determination and X chromosome dosage compensation to promote male development. Has a role in the fox-1-sex-1-mediated determination of sexual fate. This is T-box transcription factor 18 from Caenorhabditis elegans.